Here is a 129-residue protein sequence, read N- to C-terminus: Glycine cleavage system H protein (129 aa).

A Lipoyl-binding domain is found at 24–106; it reads LLKIGVSEFA…IGEGWLVILK (83 aa). Lys65 is subject to N6-lipoyllysine.

This sequence belongs to the GcvH family. The glycine cleavage system is composed of four proteins: P, T, L and H. The cofactor is (R)-lipoate.

Its function is as follows. The glycine cleavage system catalyzes the degradation of glycine. The H protein shuttles the methylamine group of glycine from the P protein to the T protein. This Prochlorococcus marinus (strain AS9601) protein is Glycine cleavage system H protein.